The chain runs to 395 residues: Non-homologous end joining protein Ku (395 aa).

The 173-residue stretch at 9 to 181 folds into the Ku domain; it reads ISFGLVSIPI…PPEDAAPDGD (173 aa). The tract at residues 252 to 395 is disordered; it reads RAARTSRDDE…SASSRKRTSA (144 aa). Polar residues-rich tracts occupy residues 283–292 and 311–320; these read SSKTSGQSSG and GKTVTRSGDS. Positions 351–361 are enriched in basic residues; that stretch reads TARKTTAKKTT. Over residues 362–371 the composition is skewed to low complexity; sequence AKGTTGTTAA.

Belongs to the prokaryotic Ku family. As to quaternary structure, homodimer. Interacts with LigD.

In terms of biological role, with LigD forms a non-homologous end joining (NHEJ) DNA repair enzyme, which repairs dsDNA breaks with reduced fidelity. Binds linear dsDNA with 5'- and 3'- overhangs but not closed circular dsDNA nor ssDNA. Recruits and stimulates the ligase activity of LigD. The sequence is that of Non-homologous end joining protein Ku from Streptomyces griseus subsp. griseus (strain JCM 4626 / CBS 651.72 / NBRC 13350 / KCC S-0626 / ISP 5235).